A 220-amino-acid polypeptide reads, in one-letter code: uncharacterized protein (220 aa).

This is an uncharacterized protein from Archaeoglobus fulgidus (strain ATCC 49558 / DSM 4304 / JCM 9628 / NBRC 100126 / VC-16).